Reading from the N-terminus, the 342-residue chain is Pre-mRNA-splicing factor 18 (342 aa).

It belongs to the PRP18 family. Interacts with the spliceosome. Part of a complex containing U4/U6 snRNPs.

The protein resides in the nucleus speckle. In terms of biological role, participates in the second step of pre-mRNA splicing. The protein is Pre-mRNA-splicing factor 18 (prpf18) of Xenopus laevis (African clawed frog).